A 938-amino-acid chain; its full sequence is Protein translocase subunit SecA 1 (938 aa).

ATP contacts are provided by residues Gln-84, 102-106, and Asp-491; that span reads GEGKT. The interval 865 to 938 is disordered; it reads QTGGVATKER…QKTGRHAKRR (74 aa). The span at 918–927 shows a compositional bias: basic and acidic residues; sequence TRKERREAAR.

Belongs to the SecA family. In terms of assembly, monomer and homodimer. Part of the essential Sec protein translocation apparatus which comprises SecA, SecYEG and auxiliary proteins SecDF. Other proteins may also be involved.

The protein resides in the cell membrane. It is found in the cytoplasm. The catalysed reaction is ATP + H2O + cellular proteinSide 1 = ADP + phosphate + cellular proteinSide 2.. Its function is as follows. Part of the Sec protein translocase complex. Interacts with the SecYEG preprotein conducting channel. Has a central role in coupling the hydrolysis of ATP to the transfer of proteins into and across the cell membrane, serving as an ATP-driven molecular motor driving the stepwise translocation of polypeptide chains across the membrane. The sequence is that of Protein translocase subunit SecA 1 from Mycolicibacterium vanbaalenii (strain DSM 7251 / JCM 13017 / BCRC 16820 / KCTC 9966 / NRRL B-24157 / PYR-1) (Mycobacterium vanbaalenii).